The primary structure comprises 258 residues: Ferredoxin--NADP reductase (258 aa).

The region spanning 2–102 (SNLNVERVLS…RKPTGTLVTS (101 aa)) is the FAD-binding FR-type domain. Aspartate 17 is a binding site for NADP(+). Residues 51–54 (RAYS), 67–69 (FSI), 74–77 (GPLT), and threonine 117 each bind FAD. Residues 144–145 (VR), 181–182 (TR), and arginine 190 contribute to the NADP(+) site. Residue 254 to 258 (AFVEK) participates in FAD binding.

It belongs to the ferredoxin--NADP reductase type 1 family. As to quaternary structure, monomer. Requires FAD as cofactor.

It catalyses the reaction 2 reduced [2Fe-2S]-[ferredoxin] + NADP(+) + H(+) = 2 oxidized [2Fe-2S]-[ferredoxin] + NADPH. Transports electrons between ferredoxin and NADPH. The sequence is that of Ferredoxin--NADP reductase from Azotobacter vinelandii.